A 687-amino-acid chain; its full sequence is Glycine--tRNA ligase beta subunit (687 aa).

Belongs to the class-II aminoacyl-tRNA synthetase family. Tetramer of two alpha and two beta subunits.

Its subcellular location is the cytoplasm. The enzyme catalyses tRNA(Gly) + glycine + ATP = glycyl-tRNA(Gly) + AMP + diphosphate. This chain is Glycine--tRNA ligase beta subunit, found in Neisseria meningitidis serogroup B (strain ATCC BAA-335 / MC58).